The primary structure comprises 203 residues: Small ribosomal subunit protein uS4 (203 aa).

The region spanning 93–156 is the S4 RNA-binding domain; the sequence is RRLDNVVYRL…MKVPAILEAV (64 aa).

Belongs to the universal ribosomal protein uS4 family. In terms of assembly, part of the 30S ribosomal subunit. Contacts protein S5. The interaction surface between S4 and S5 is involved in control of translational fidelity.

One of the primary rRNA binding proteins, it binds directly to 16S rRNA where it nucleates assembly of the body of the 30S subunit. Its function is as follows. With S5 and S12 plays an important role in translational accuracy. The chain is Small ribosomal subunit protein uS4 from Streptococcus pyogenes serotype M49 (strain NZ131).